The chain runs to 70 residues: Sec-independent protein translocase protein TatA (70 aa).

A helical membrane pass occupies residues 1–21; the sequence is MGSFSIWHWLIVLVVVALLFG. The segment at 45–70 is disordered; it reads KGESEQAEDETAKPLPKERDKDSARG.

This sequence belongs to the TatA/E family. In terms of assembly, the Tat system comprises two distinct complexes: a TatABC complex, containing multiple copies of TatA, TatB and TatC subunits, and a separate TatA complex, containing only TatA subunits. Substrates initially bind to the TatABC complex, which probably triggers association of the separate TatA complex to form the active translocon.

The protein localises to the cell inner membrane. Its function is as follows. Part of the twin-arginine translocation (Tat) system that transports large folded proteins containing a characteristic twin-arginine motif in their signal peptide across membranes. TatA could form the protein-conducting channel of the Tat system. The sequence is that of Sec-independent protein translocase protein TatA from Phenylobacterium zucineum (strain HLK1).